The chain runs to 682 residues: TPR repeat-containing thioredoxin TTL4 (682 aa).

Disordered regions lie at residues 1 to 120 (MSHY…GTPL) and 132 to 157 (NNNNSSRGGGSGATSPNPGVLPTGNI). Ser8 carries the post-translational modification Phosphoserine. The segment covering 16–39 (KFRDSLSFQRDDDVINKPDFRELD) has biased composition (basic and acidic residues). Ser42 bears the Phosphoserine mark. The segment covering 48–71 (GSSSAAATPAASGSSSSSSGSASG) has biased composition (low complexity). TPR repeat units follow at residues 211–244 (SEEVKKAGNVMYRKGNYAEALALYDRAISLSPEN), 246–278 (AYRSNRAAALAASGRLEEAVKECLEAVRCDPSY), 280–312 (RAHQRLASLYLRLGEAENARRHLCVSGQCPDQA), 402–435 (AYVLCVQAQVDMALGRFENAIVKVERAMTIDHSN), 449–482 (VAKARTRGNELFSSGRYSEASVAYGDGLKLDAFN), 483–516 (SVLYCNRAACWFKLGMWEKSVDDCNQALRIQPSY), and 518–550 (KALLRRAASYGKLGRWEDAVRDYEVLRKELPGD). Residues 587–674 (DKFKTATSLP…MVCPSHQLLE (88 aa)) enclose the Thioredoxin domain.

In terms of tissue distribution, widely expressed.

Involved in osmotic and salt stress tolerance. May play a role in the control of meristematic cell size during osmotic stress. The polypeptide is TPR repeat-containing thioredoxin TTL4 (TTL4) (Arabidopsis thaliana (Mouse-ear cress)).